A 237-amino-acid chain; its full sequence is Ubiquitin-conjugating enzyme E2 34 (237 aa).

The UBC core domain occupies 5–162 (ACIKRLQKEY…FPEYVEKYNQ (158 aa)). Cys87 functions as the Glycyl thioester intermediate in the catalytic mechanism. Residues 168-207 (QATTQLTTPESPQKSDTKVESEKTIDPTKGDSEGGLKERK) are disordered. Over residues 180–204 (QKSDTKVESEKTIDPTKGDSEGGLK) the composition is skewed to basic and acidic residues. The helical transmembrane segment at 214-234 (LPAWIILLLVSVFGVVMALPL) threads the bilayer.

Belongs to the ubiquitin-conjugating enzyme family.

The protein localises to the membrane. The catalysed reaction is S-ubiquitinyl-[E1 ubiquitin-activating enzyme]-L-cysteine + [E2 ubiquitin-conjugating enzyme]-L-cysteine = [E1 ubiquitin-activating enzyme]-L-cysteine + S-ubiquitinyl-[E2 ubiquitin-conjugating enzyme]-L-cysteine.. It functions in the pathway protein modification; protein ubiquitination. Its function is as follows. Accepts the ubiquitin from the E1 complex and catalyzes its covalent attachment to other proteins. In Arabidopsis thaliana (Mouse-ear cress), this protein is Ubiquitin-conjugating enzyme E2 34 (UBC34).